The chain runs to 748 residues: Pentatricopeptide repeat-containing protein At3g13880 (748 aa).

PPR repeat units lie at residues 46–80 (DSEG…SLNP), 81–111 (CLYL…MPER), 112–146 (NIIS…NLKL), 147–181 (DKFT…GLSQ), 182–212 (QVFL…CDER), 213–247 (DQVS…GLNL), 248–285 (TTYA…GMEF), 286–316 (DIVV…MPSK), 317–356 (NVVT…GLEP), 357–391 (SPST…NFQS), 392–422 (DEFI…TSKQ), 423–457 (DIAS…HIRP), 458–492 (EEYT…GIDA), 493–523 (FTSV…VQNP), 524–558 (DVAT…GIKP), 559–589 (NQQA…MKND), and 595–629 (NEKH…DHPV). The type E motif stretch occupies residues 630–705 (TWRALLSSCR…EPALSWIVIG (76 aa)). A type E(+) motif region spans residues 706-736 (NQTHSFAVADLSHPSSQMIYTMLETMDNVDF).

Belongs to the PPR family. PCMP-E subfamily.

The protein is Pentatricopeptide repeat-containing protein At3g13880 (PCMP-E89) of Arabidopsis thaliana (Mouse-ear cress).